A 173-amino-acid chain; its full sequence is uncharacterized protein (173 aa).

Residues 1–20 form the signal peptide; sequence MWYKVLGIVSLCSVYVSTQG. Asn-53 carries an N-linked (GlcNAc...) asparagine glycan.

In terms of tissue distribution, component of the acid-insoluble organic matrix of calcified shell layers (at protein level).

The protein localises to the secreted. This is an uncharacterized protein from Haliotis asinina (Donkey's ear abalone).